The primary structure comprises 269 residues: Intermembrane phospholipid transport system ATP-binding protein MlaF (269 aa).

The region spanning 9-245 is the ABC transporter domain; it reads VDMRDVSFTR…PDPRVRQFLD (237 aa). 41 to 48 serves as a coordination point for ATP; it reads GPSGIGKT.

Belongs to the ABC transporter superfamily. MlaF family. In terms of assembly, the complex is composed of two ATP-binding proteins (MlaF), two transmembrane proteins (MlaE), two cytoplasmic solute-binding proteins (MlaB) and six periplasmic solute-binding proteins (MlaD).

The protein localises to the cell inner membrane. In terms of biological role, part of the ABC transporter complex MlaFEDB, which is involved in a phospholipid transport pathway that maintains lipid asymmetry in the outer membrane by retrograde trafficking of phospholipids from the outer membrane to the inner membrane. Responsible for energy coupling to the transport system. The protein is Intermembrane phospholipid transport system ATP-binding protein MlaF of Escherichia coli O157:H7.